We begin with the raw amino-acid sequence, 301 residues long: MTWKTQLPTARGKLLIDEALAPFTWFRVGGPADVVFLPADEQDLSDFLKGLDPSVPVMAIGVGSNLLVRDGGVDGVVIRLGKGFNGVEALGDNRIKAGSAVPDAILARKAAEAGIAGLEFYVGVPGTIGGAVIMNAGCYGAETVNVVKSVRVMNRAGVVRELSVEDLHYTYRHSALQDGEPVIVLDAIFEGTPDEPEAIKARMAEITARRETTQPIREKTGGSTFKNPPGHSSWKLVDEAGWRGKPYGGAMFSPLHSNFLINTGEATAADLEGLGEAVRADVLAKTGVQLDWEIKRIGRAG.

Residues 27–194 (RVGGPADVVF…LDAIFEGTPD (168 aa)) form the FAD-binding PCMH-type domain. R172 is an active-site residue. S223 serves as the catalytic Proton donor. The active site involves E293.

The protein belongs to the MurB family. FAD serves as cofactor.

It localises to the cytoplasm. The enzyme catalyses UDP-N-acetyl-alpha-D-muramate + NADP(+) = UDP-N-acetyl-3-O-(1-carboxyvinyl)-alpha-D-glucosamine + NADPH + H(+). It participates in cell wall biogenesis; peptidoglycan biosynthesis. In terms of biological role, cell wall formation. The sequence is that of UDP-N-acetylenolpyruvoylglucosamine reductase from Caulobacter vibrioides (strain NA1000 / CB15N) (Caulobacter crescentus).